The following is a 417-amino-acid chain: Cyanophycinase (417 aa).

The signal sequence occupies residues M1–A23. Residues S169, D188, and H222 each act as charge relay system in the active site.

The protein belongs to the peptidase S51 family.

Its subcellular location is the secreted. It carries out the reaction [L-4-(L-arginin-2-N-yl)aspartate](n) + H2O = [L-4-(L-arginin-2-N-yl)aspartate](n-1) + L-4-(L-arginin-2-N-yl)aspartate. With respect to regulation, inhibited by serine protease inhibitors. Inhibited by N-Bromo-succinimide. In terms of biological role, exopeptidase that catalyzes the hydrolytic cleavage of multi-L-arginyl-poly-L-aspartic acid (cyanophycin; a water-insoluble reserve polymer) into aspartate-arginine dipeptides. The sequence is that of Cyanophycinase (cphE) from Pseudomonas anguilliseptica.